The following is a 1353-amino-acid chain: Trifunctional purine biosynthetic protein adenosine-3 (1353 aa).

The region spanning 114–321 (KDFMLRHGIP…LFDVMEACCS (208 aa)) is the ATP-grasp domain. Residues 193–196 (EELL), glutamate 200, arginine 223, and asparagine 232 contribute to the ATP site. 2 residues coordinate Mg(2+): glutamate 291 and asparagine 293. The interval 441–1155 (GLSYKDSGVD…QKMLSQRRKR (715 aa)) is AIRS domain. Residues serine 814 and serine 816 each carry the phosphoserine modification. A GART domain region spans residues 1153-1353 (RKRVAVLISG…ALISPEVSSQ (201 aa)). 1164 to 1166 (GSN) provides a ligand contact to N(1)-(5-phospho-beta-D-ribosyl)glycinamide. (6R)-10-formyltetrahydrofolate-binding positions include arginine 1219, 1244–1247 (MRVL), and asparagine 1261. Histidine 1263 acts as the Proton donor in catalysis. (6R)-10-formyltetrahydrofolate is bound at residue 1295–1299 (DEGVD). Position 1325 to 1328 (1325 to 1328 (HKAE)) interacts with N(1)-(5-phospho-beta-D-ribosyl)glycinamide.

The protein in the N-terminal section; belongs to the GARS family. It in the central section; belongs to the AIR synthase family. This sequence in the C-terminal section; belongs to the GART family. Homodimer. It depends on Mg(2+) as a cofactor. Requires Mn(2+) as cofactor.

It catalyses the reaction 5-phospho-beta-D-ribosylamine + glycine + ATP = N(1)-(5-phospho-beta-D-ribosyl)glycinamide + ADP + phosphate + H(+). The enzyme catalyses 2-formamido-N(1)-(5-O-phospho-beta-D-ribosyl)acetamidine + ATP = 5-amino-1-(5-phospho-beta-D-ribosyl)imidazole + ADP + phosphate + H(+). It carries out the reaction N(1)-(5-phospho-beta-D-ribosyl)glycinamide + (6R)-10-formyltetrahydrofolate = N(2)-formyl-N(1)-(5-phospho-beta-D-ribosyl)glycinamide + (6S)-5,6,7,8-tetrahydrofolate + H(+). The protein operates within purine metabolism; IMP biosynthesis via de novo pathway; 5-amino-1-(5-phospho-D-ribosyl)imidazole from N(2)-formyl-N(1)-(5-phospho-D-ribosyl)glycinamide: step 2/2. It functions in the pathway purine metabolism; IMP biosynthesis via de novo pathway; N(1)-(5-phospho-D-ribosyl)glycinamide from 5-phospho-alpha-D-ribose 1-diphosphate: step 2/2. Its pathway is purine metabolism; IMP biosynthesis via de novo pathway; N(2)-formyl-N(1)-(5-phospho-D-ribosyl)glycinamide from N(1)-(5-phospho-D-ribosyl)glycinamide (10-formyl THF route): step 1/1. Functionally, trifunctional enzyme that catalyzes three distinct reactions as part of the 'de novo' inosine monophosphate biosynthetic pathway. This chain is Trifunctional purine biosynthetic protein adenosine-3, found in Drosophila melanogaster (Fruit fly).